A 920-amino-acid polypeptide reads, in one-letter code: Phosphoenolpyruvate carboxylase (920 aa).

Catalysis depends on residues His-138 and Lys-583.

The protein belongs to the PEPCase type 1 family. Mg(2+) is required as a cofactor.

The catalysed reaction is oxaloacetate + phosphate = phosphoenolpyruvate + hydrogencarbonate. Forms oxaloacetate, a four-carbon dicarboxylic acid source for the tricarboxylic acid cycle. In Streptococcus pyogenes serotype M1, this protein is Phosphoenolpyruvate carboxylase.